Here is a 233-residue protein sequence, read N- to C-terminus: Preprocaerulein type-4 (233 aa).

A signal peptide spans 1–26 (MFKGILLCVLFAVLSANPLSQPEGFA). The propeptide occupies 27–72 (DEERDVRGLASLLGKALKATLKIGTHFLGGAPQQREANDERRFADG). At Gln-73 the chain carries Pyrrolidone carboxylic acid. At Tyr-76 the chain carries Sulfotyrosine. Phenylalanine amide is present on Phe-82. Residues 86-87 (DG) constitute a propeptide that is removed on maturation. Gln-88 is modified (pyrrolidone carboxylic acid). At Tyr-91 the chain carries Sulfotyrosine. Phe-97 bears the Phenylalanine amide mark. A propeptide spanning residues 101 to 151 (DDEDDVHERDVRGFGSFLGKALKAALKIGANALGGAPQQREANDERRFADG) is cleaved from the precursor. Pyrrolidone carboxylic acid is present on Gln-152. Tyr-155 is modified (sulfotyrosine). Phe-161 carries the post-translational modification Phenylalanine amide. The propeptide occupies 165–215 (DDEDDVNERDVRGFGSFLGKALKAALKIGANALGGSPQQREANDERRFADG). Residues 197–233 (LGGSPQQREANDERRFADGQQDYTGWMDFGRRNGEDD) form a disordered region. Gln-216 is modified (pyrrolidone carboxylic acid). The residue at position 219 (Tyr-219) is a Sulfotyrosine. The residue at position 225 (Phe-225) is a Phenylalanine amide. Positions 229–233 (NGEDD) are excised as a propeptide.

Belongs to the gastrin/cholecystokinin family. As to expression, expressed by the skin glands.

Its subcellular location is the secreted. The pharmacological activities of caerulein are quite similar to the physiological activities of gastrin and related peptides. The polypeptide is Preprocaerulein type-4 (Xenopus laevis (African clawed frog)).